Consider the following 121-residue polypeptide: Large ribosomal subunit protein eL18 (121 aa).

It belongs to the eukaryotic ribosomal protein eL18 family.

The chain is Large ribosomal subunit protein eL18 from Methanocaldococcus jannaschii (strain ATCC 43067 / DSM 2661 / JAL-1 / JCM 10045 / NBRC 100440) (Methanococcus jannaschii).